Reading from the N-terminus, the 201-residue chain is dITP/XTP pyrophosphatase (201 aa).

8 to 13 is a binding site for substrate; that stretch reads TTNENK. Catalysis depends on Asp68, which acts as the Proton acceptor. Residue Asp68 coordinates Mg(2+). Substrate is bound by residues Ser69, 155 to 158, Lys177, and 182 to 183; these read FGYD and HR.

The protein belongs to the HAM1 NTPase family. As to quaternary structure, homodimer. Mg(2+) is required as a cofactor.

It carries out the reaction XTP + H2O = XMP + diphosphate + H(+). The catalysed reaction is dITP + H2O = dIMP + diphosphate + H(+). It catalyses the reaction ITP + H2O = IMP + diphosphate + H(+). Its function is as follows. Pyrophosphatase that catalyzes the hydrolysis of nucleoside triphosphates to their monophosphate derivatives, with a high preference for the non-canonical purine nucleotides XTP (xanthosine triphosphate), dITP (deoxyinosine triphosphate) and ITP. Seems to function as a house-cleaning enzyme that removes non-canonical purine nucleotides from the nucleotide pool, thus preventing their incorporation into DNA/RNA and avoiding chromosomal lesions. In Borrelia garinii subsp. bavariensis (strain ATCC BAA-2496 / DSM 23469 / PBi) (Borreliella bavariensis), this protein is dITP/XTP pyrophosphatase.